A 664-amino-acid polypeptide reads, in one-letter code: Two-component response regulator ARR2 (664 aa).

Residues 1 to 21 (MVNPGHGRGPDSGTAAGGSNS) are disordered. A Response regulatory domain is found at 29–144 (RVLVVDDDPT…ALKNIWQHVV (116 aa)). Position 80 is a 4-aspartylphosphate (aspartate 80). The tract at residues 151 to 215 (WNVSEHSGGS…DDKEDSSSLK (65 aa)) is disordered. Basic and acidic residues predominate over residues 165–178 (GGDRDRQQQHREDA). Residues 180–191 (NNSSSVNEGNGR) are compositionally biased toward polar residues. A compositionally biased stretch (acidic residues) spans 200 to 209 (EVDDQGDDKE). The Nuclear localization signal motif lies at 215–218 (KKPR). The myb-like GARP DNA-binding region spans 218–268 (RVVWSVELHQQFVAAVNQLGVDKAVPKKILEMMNVPGLTRENVASHLQKYR). Over residues 554–567 (AAFSTSEAYSSSST) the composition is skewed to low complexity. Positions 554 to 589 (AAFSTSEAYSSSSTQRKRRETDATVVGEHGQNLQSP) are disordered.

The protein belongs to the ARR family. Type-B subfamily. Binds the target DNA as a monomer. Interacts with histidine-containing phosphotransfer proteins. Post-translationally, two-component system major event consists of a His-to-Asp phosphorelay between a sensor histidine kinase (HK) and a response regulator (RR). In plants, the His-to-Asp phosphorelay involves an additional intermediate named Histidine-containing phosphotransfer protein (HPt). This multistep phosphorelay consists of a His-Asp-His-Asp sequential transfer of a phosphate group between first a His and an Asp of the HK protein, followed by the transfer to a conserved His of the HPt protein and finally the transfer to an Asp in the receiver domain of the RR protein. Phosphorylated in response to cytokinin mediated by AHK3. Detected in the whole plant. Predominantly expressed in pollen.

The protein resides in the nucleus. Transcriptional activator that binds specifically to the DNA sequence 5'-[AG]GATT-3'. Functions as a response regulator involved in His-to-Asp phosphorelay signal transduction system. Phosphorylation of the Asp residue in the receiver domain activates the ability of the protein to promote the transcription of target genes. Could directly activate some type-A response regulators in response to cytokinins. Involved in the expression of nuclear genes for components of mitochondrial complex I. Promotes cytokinin-mediated leaf longevity. Involved in the ethylene signaling pathway in an ETR1-dependent manner and in the cytokinin signaling pathway. This chain is Two-component response regulator ARR2 (ARR2), found in Arabidopsis thaliana (Mouse-ear cress).